Here is a 287-residue protein sequence, read N- to C-terminus: GDT1-like protein C17G8.08c (287 aa).

Transmembrane regions (helical) follow at residues 7-27 (WAII…GEGM), 50-70 (LIFS…FIVA), 89-109 (ALFI…LLFP), 112-132 (LTDI…LMEA), 194-214 (VMAT…FVSE), 232-252 (VYGV…LAVI), and 267-287 (MFIG…QGFF).

It belongs to the GDT1 family.

The protein resides in the membrane. In Schizosaccharomyces pombe (strain 972 / ATCC 24843) (Fission yeast), this protein is GDT1-like protein C17G8.08c.